We begin with the raw amino-acid sequence, 322 residues long: HPr kinase/phosphorylase (322 aa).

Residues His-146 and Lys-167 contribute to the active site. 161–168 contributes to the ATP binding site; the sequence is GDSGLGKS. Ser-168 contacts Mg(2+). Asp-185 serves as the catalytic Proton acceptor; for phosphorylation activity. Proton donor; for dephosphorylation activity. The interval 209–218 is important for the catalytic mechanism of both phosphorylation and dephosphorylation; the sequence is LEVRGLGLLD. Position 210 (Glu-210) interacts with Mg(2+). Residue Arg-250 is part of the active site. Positions 271–276 are important for the catalytic mechanism of dephosphorylation; the sequence is QVAAGR.

The protein belongs to the HPrK/P family. As to quaternary structure, homohexamer. Mg(2+) serves as cofactor.

It carries out the reaction [HPr protein]-L-serine + ATP = [HPr protein]-O-phospho-L-serine + ADP + H(+). The enzyme catalyses [HPr protein]-O-phospho-L-serine + phosphate + H(+) = [HPr protein]-L-serine + diphosphate. In terms of biological role, catalyzes the ATP- as well as the pyrophosphate-dependent phosphorylation of a specific serine residue in HPr, a phosphocarrier protein of the phosphoenolpyruvate-dependent sugar phosphotransferase system (PTS). HprK/P also catalyzes the pyrophosphate-producing, inorganic phosphate-dependent dephosphorylation (phosphorolysis) of seryl-phosphorylated HPr (P-Ser-HPr). The polypeptide is HPr kinase/phosphorylase (Paraburkholderia phymatum (strain DSM 17167 / CIP 108236 / LMG 21445 / STM815) (Burkholderia phymatum)).